A 336-amino-acid chain; its full sequence is Adenylosuccinate synthetase (336 aa).

Residues 12-18 (GDEGKGK) and 42-44 (GHS) contribute to the GTP site. The active-site Proton acceptor is Asp-13. Positions 13 and 42 each coordinate Mg(2+). Residues 13 to 16 (DEGK), 40 to 43 (NAGH), Thr-127, Arg-141, Gln-179, Thr-194, and Arg-256 each bind IMP. The Proton donor role is filled by His-43. Position 252–258 (252–258 (TVTGRRR)) interacts with substrate. Residues Arg-258, 284–286 (CLD), and 324–326 (STG) each bind GTP.

The protein belongs to the adenylosuccinate synthetase family. As to quaternary structure, homodimer. It depends on Mg(2+) as a cofactor.

The protein resides in the cytoplasm. The enzyme catalyses IMP + L-aspartate + GTP = N(6)-(1,2-dicarboxyethyl)-AMP + GDP + phosphate + 2 H(+). It functions in the pathway purine metabolism; AMP biosynthesis via de novo pathway; AMP from IMP: step 1/2. Plays an important role in the de novo pathway of purine nucleotide biosynthesis. Catalyzes the first committed step in the biosynthesis of AMP from IMP. The protein is Adenylosuccinate synthetase of Methanococcus aeolicus (strain ATCC BAA-1280 / DSM 17508 / OCM 812 / Nankai-3).